A 586-amino-acid polypeptide reads, in one-letter code: Protein translocase subunit SecD (586 aa).

The next 6 membrane-spanning stretches (helical) occupy residues 7–27 (LILILLVTFFACLLIFPTLKW), 418–438 (SALALCLVFLFICVYYGLSGV), 439–459 (VAGFSLVIYNVFLILAILSAF), 465–485 (LTSIAGLILTMGMAVDINIVI), 521–541 (TFIAVLFLTLLGTGVIQGFAW), and 546–566 (GIVASLFSSLIFSRFILEFII).

Belongs to the SecD/SecF family. SecD subfamily. As to quaternary structure, forms a complex with SecF. Part of the essential Sec protein translocation apparatus which comprises SecA, SecYEG and auxiliary proteins SecDF. Other proteins may also be involved.

Its subcellular location is the cell inner membrane. Part of the Sec protein translocase complex. Interacts with the SecYEG preprotein conducting channel. SecDF uses the proton motive force (PMF) to complete protein translocation after the ATP-dependent function of SecA. The chain is Protein translocase subunit SecD from Borreliella burgdorferi (strain ATCC 35210 / DSM 4680 / CIP 102532 / B31) (Borrelia burgdorferi).